The following is a 134-amino-acid chain: Protein Turandot E (134 aa).

The first 38 residues, 1 to 38 (MSYTRTVHSSTSILKMNSALQISCLLVVLGCLLGSGHC), serve as a signal peptide directing secretion.

The protein belongs to the Turandot family.

It is found in the secreted. In terms of biological role, a humoral factor that may play a role in stress tolerance. In Drosophila simulans (Fruit fly), this protein is Protein Turandot E.